A 473-amino-acid polypeptide reads, in one-letter code: Pup--protein ligase (473 aa).

Residue glutamate 9 coordinates Mg(2+). Arginine 54 lines the ATP pocket. Residue tyrosine 56 coordinates Mg(2+). The Proton acceptor role is filled by aspartate 58. Glutamate 64 is a Mg(2+) binding site. ATP-binding residues include threonine 67 and tryptophan 425.

This sequence belongs to the Pup ligase/Pup deamidase family. Pup-conjugating enzyme subfamily.

The enzyme catalyses ATP + [prokaryotic ubiquitin-like protein]-L-glutamate + [protein]-L-lysine = ADP + phosphate + N(6)-([prokaryotic ubiquitin-like protein]-gamma-L-glutamyl)-[protein]-L-lysine.. It participates in protein degradation; proteasomal Pup-dependent pathway. Its pathway is protein modification; protein pupylation. In terms of biological role, catalyzes the covalent attachment of the prokaryotic ubiquitin-like protein modifier Pup to the proteasomal substrate proteins, thereby targeting them for proteasomal degradation. This tagging system is termed pupylation. The ligation reaction involves the side-chain carboxylate of the C-terminal glutamate of Pup and the side-chain amino group of a substrate lysine. The sequence is that of Pup--protein ligase from Brachybacterium faecium (strain ATCC 43885 / DSM 4810 / JCM 11609 / LMG 19847 / NBRC 14762 / NCIMB 9860 / 6-10).